The chain runs to 694 residues: MVLINGIKYACERCIRGHRVTTCNHTDQPLMMIKPKGRPSTTCDYCKQLRKNKNANPEGVCTCGRLEKKKLAQKAKEEARAKAKEKQRKQCTCGTDEVCKYHAQKRHLRKSPSSSQKKGRSISRSQPMFERVLSSTSLDSNMLSGHGALSDTSSILTSTFLDSEPGVGKISKDYHHVPSLASISSLQSSQSLDQNFSIPQSPPLSSMSFNFLTGNINETNQNHSNHQHSKSGNNWQDSSVSLPAKADSRLNMMDKNNSVGLDLLGHSKRISPISNSRVGEVSVPLEEYIPSDIDGVGRVTDKSSLVYDWPFDESIERNFSTTATAATGESKFDINDNCNRINSKSYSKTNSMNGNGMNNSNNNNINSNGNDKNNNNSSRQEHQGNGLFDMFTDSSSISTLSRANLLLQEKIGSQENSVKQENYSKNPQLRHQLTSRSRSFIHHPANEYLKNTFGNSHSNDIGKGVEVLSLTPSFMDIPEKERETERSPSSNYITDRPFTRKPRSSSIDVNHRYPPMAPTTVATSPGALNNAVASNLDDQLSLTSLNSQPSSIANMMMDPSNLAEQSSIHSVPQSINSPRMPKTGSRQDKNIHTKKEERNPLNNIHDLSQLENVPDEMNQMFSPPLKSMNRPDAIRENSSSSNFIIQGNSMISTPSGRNDLPDTSPMSSIQTASPPSQLLTDQGFADLDNFMSSL.

The segment at residues 1-40 (MVLINGIKYACERCIRGHRVTTCNHTDQPLMMIKPKGRPS) is a DNA-binding region (copper-fist). Residues cysteine 11, cysteine 14, cysteine 23, and histidine 25 each coordinate Zn(2+). 2 disordered regions span residues 104–128 (QKRHLRKSPSSSQKKGRSISRSQPM) and 209–240 (FNFLTGNINETNQNHSNHQHSKSGNNWQDSSV). Positions 111–126 (SPSSSQKKGRSISRSQ) are enriched in polar residues. Serine 125, serine 231, serine 241, and serine 291 each carry phosphoserine. Disordered stretches follow at residues 332-388 (FDIN…NGLF), 479-514 (EKERETERSPSSNYITDRPFTRKPRSSSIDVNHRYP), 566-588 (SSIHSVPQSINSPRMPKTGSRQD), and 650-677 (MISTPSGRNDLPDTSPMSSIQTASPPSQ). A compositionally biased stretch (polar residues) spans 336–349 (DNCNRINSKSYSKT). Over residues 350–378 (NSMNGNGMNNSNNNNINSNGNDKNNNNSS) the composition is skewed to low complexity. 2 stretches are compositionally biased toward polar residues: residues 566–577 (SSIHSVPQSINS) and 664–677 (SPMSSIQTASPPSQ).

The protein resides in the nucleus. Its function is as follows. Regulates the transcription of a set of genes, many of which encode membrane proteins. Among the genes regulated are YGR138C and YRO2. Does not seem to be dependent on copper. The polypeptide is Transcriptional activator HAA1 (HAA1) (Saccharomyces cerevisiae (strain ATCC 204508 / S288c) (Baker's yeast)).